Here is a 118-residue protein sequence, read N- to C-terminus: Basic phospholipase A2 PA-15 (118 aa).

7 disulfides stabilise this stretch: C11–C71, C27–C117, C29–C45, C44–C98, C51–C91, C60–C84, and C78–C89. Residues Y28, G30, and G32 each contribute to the Ca(2+) site. The active site involves H48. D49 contacts Ca(2+). D92 is a catalytic residue.

This sequence belongs to the phospholipase A2 family. Group I subfamily. D49 sub-subfamily. Ca(2+) is required as a cofactor. Expressed by the venom gland.

The protein localises to the secreted. The catalysed reaction is a 1,2-diacyl-sn-glycero-3-phosphocholine + H2O = a 1-acyl-sn-glycero-3-phosphocholine + a fatty acid + H(+). Functionally, PLA2 catalyzes the calcium-dependent hydrolysis of the 2-acyl groups in 3-sn-phosphoglycerides. This Pseudechis australis (Mulga snake) protein is Basic phospholipase A2 PA-15.